The chain runs to 184 residues: Oligoribonuclease (184 aa).

The Exonuclease domain maps to 8 to 171 (LIWIDLEMTG…EDIRESVVEL (164 aa)). Residue Tyr-129 is part of the active site.

Belongs to the oligoribonuclease family.

The protein localises to the cytoplasm. Its function is as follows. 3'-to-5' exoribonuclease specific for small oligoribonucleotides. The protein is Oligoribonuclease of Buchnera aphidicola subsp. Acyrthosiphon pisum (strain APS) (Acyrthosiphon pisum symbiotic bacterium).